We begin with the raw amino-acid sequence, 533 residues long: Multicopy suppressor of sporulation protein msa1 (533 aa).

The segment at 30–68 (DIPPGSLSENDNSTTFIKPPLETASSSTPIPSSSSSGVL) is disordered. Positions 36-45 (LSENDNSTTF) are enriched in polar residues. Over residues 54 to 68 (SSSTPIPSSSSSGVL) the composition is skewed to low complexity. Residues 79–158 (ACLFVASLNS…RHIRIERAKV (80 aa)) enclose the RRM 1 domain. The tract at residues 237-292 (YKKKGSSPFSPPNAHSRRRKSQGKDQSNTPVIKAPAPIPFSVSSDPPSTMGRSNSA) is disordered. Residues 277 to 292 (SVSSDPPSTMGRSNSA) are compositionally biased toward polar residues. Positions 365 to 441 (YSIFVGQLDP…KPLRVEFRQL (77 aa)) constitute an RRM 2 domain.

Its subcellular location is the cytoplasm. Its function is as follows. Negative regulator of sexual differentiation. Acts by repressing the transcription of meiosis-inducing, ste11-regulated genes. This is Multicopy suppressor of sporulation protein msa1 (msa1) from Schizosaccharomyces pombe (strain 972 / ATCC 24843) (Fission yeast).